The sequence spans 1465 residues: Neuropathy target esterase sws (1465 aa).

Residues 1 to 34 (MDVLEMLRASASGSYNTIFSEAWCQYVSKQITAT) lie on the Lumenal side of the membrane. The chain crosses the membrane as a helical span at residues 35–55 (MYMYCALGMMGVLFLAWFMYF). The Cytoplasmic segment spans residues 56 to 1465 (KRMARLRLRD…RSSANNETKN (1410 aa)). 174 to 301 (IFGHFEKPVF…IRVIQVIMIR (128 aa)) serves as a coordination point for a nucleoside 3',5'-cyclic phosphate. Polar residues-rich tracts occupy residues 331–349 (STMS…RQTP) and 434–454 (QQSV…TPDG). 2 disordered regions span residues 331 to 421 (STMS…TEVH) and 434 to 460 (QQSV…SCPP). 2 positions are modified to phosphoserine: serine 446 and serine 455. Residues 484-611 (ELGL…VVRR) and 600-727 (IVLD…LSHR) each bind a nucleoside 3',5'-cyclic phosphate. Positions 954–1120 (LVLGGGGARG…VNNLPGHLWR (167 aa)) constitute a PNPLA domain. The GXGXXG motif lies at 958 to 963 (GGGARG). The GXSXG signature appears at 985 to 989 (GVSIG). The Nucleophile role is filled by serine 987. Catalysis depends on aspartate 1107, which acts as the Proton acceptor. Residues 1107–1109 (DGG) carry the DGA/G motif. Serine 1201 is modified (phosphoserine). Residues 1371 to 1465 (LERKTDKSTQ…RSSANNETKN (95 aa)) are disordered. The segment covering 1378–1390 (STQSSPPTSSRTS) has biased composition (low complexity). Basic and acidic residues predominate over residues 1392–1402 (RGKEEARHMDN). The span at 1413-1424 (TGSGATEGIHTS) shows a compositional bias: polar residues. Over residues 1447–1456 (VYKDEDKENR) the composition is skewed to basic and acidic residues.

The protein belongs to the NTE family. Interacts with Pka-C3; interaction inhibits the catalytic function of Pka-C3 and the esterase activity of sws.

Its subcellular location is the endoplasmic reticulum membrane. The catalysed reaction is a 1-acyl-sn-glycero-3-phosphocholine + H2O = sn-glycerol 3-phosphocholine + a fatty acid + H(+). Functionally, phospholipase B that deacylates intracellular phosphatidylcholine (PtdCho), generating glycerophosphocholine (GroPtdCho). This deacylation occurs at both sn-2 and sn-1 positions of PtdCho. Its specific chemical modification by certain organophosphorus (OP) compounds leads to distal axonopathy. Plays a role in the signaling mechanism between neurons and glia that regulates glia wrapping during development of the adult brain. Essential for membrane lipid homeostasis and cell survival in both neurons and glia of the adult brain. This Drosophila erecta (Fruit fly) protein is Neuropathy target esterase sws.